A 170-amino-acid polypeptide reads, in one-letter code: MALLNVLIYPDERLKTVAEPVSVFDEELQTFIDNMFETMYHEEGIGLAATQVNVHKRIITIDIEGTKENQIVLINPEILESFGETGIEEGCLSLPGLRGFVPRKETVKVKAQNRQGEDFMLDADGLLAICIQHEIDHLNGIVFADHLSPLKRQRMKEKLLKLQKQIAKNR.

Fe cation is bound by residues Cys91 and His133. Glu134 is an active-site residue. His137 provides a ligand contact to Fe cation.

The protein belongs to the polypeptide deformylase family. Fe(2+) is required as a cofactor.

It carries out the reaction N-terminal N-formyl-L-methionyl-[peptide] + H2O = N-terminal L-methionyl-[peptide] + formate. In terms of biological role, removes the formyl group from the N-terminal Met of newly synthesized proteins. Requires at least a dipeptide for an efficient rate of reaction. N-terminal L-methionine is a prerequisite for activity but the enzyme has broad specificity at other positions. This chain is Peptide deformylase, found in Histophilus somni (strain 129Pt) (Haemophilus somnus).